The chain runs to 572 residues: E3 ubiquitin-protein ligase ZFP91 (572 aa).

Residues 1–12 (MPGETEEPRSPE) show a composition bias toward basic and acidic residues. The segment at 1–308 (MPGETEEPRS…PRLPKRRKKP (308 aa)) is disordered. Low complexity predominate over residues 61-70 (AAAAAAAAAA). The span at 72 to 85 (SRRRKAEYPRRRRS) shows a compositional bias: basic residues. 2 positions are modified to phosphoserine: Ser-86 and Ser-106. A compositionally biased stretch (basic and acidic residues) spans 122 to 131 (LTTDKDPKEE). Positions 143–162 (SITTTRASRSWRSSSRTSIS) are enriched in low complexity. The span at 209-225 (SDEEEEEEEEMLISEEE) shows a compositional bias: acidic residues. 2 stretches are compositionally biased toward basic and acidic residues: residues 226-247 (IPFK…ETPK) and 254-271 (KVKE…VEVE). Positions 272–284 (VKEEENEIREDEE) are enriched in acidic residues. C2H2-type zinc fingers lie at residues 313 to 338 (VRCE…KYQH), 344 to 368 (YVCP…AKHH), 374 to 396 (YICE…RMIH), 402 to 424 (LQCE…MKKH), and 432 to 455 (FSCN…AKSH). The segment at 340-370 (LKKKYVCPHPSCGRLFRLQKQLLRHAKHHTD) is interaction with MAP3K14/NIK.

It belongs to the krueppel C2H2-type zinc-finger protein family. Interacts with MAP3K14/NIK. In terms of tissue distribution, found in all the examined tissues including brain, heart, kidney, lung, liver, spleen, thymus, skeletal muscle, ovary and testis.

The protein localises to the nucleus. The enzyme catalyses S-ubiquitinyl-[E2 ubiquitin-conjugating enzyme]-L-cysteine + [acceptor protein]-L-lysine = [E2 ubiquitin-conjugating enzyme]-L-cysteine + N(6)-ubiquitinyl-[acceptor protein]-L-lysine.. It participates in protein modification; protein ubiquitination. In terms of biological role, atypical E3 ubiquitin-protein ligase that mediates 'Lys-63'-linked ubiquitination of MAP3K14/NIK, leading to stabilize and activate MAP3K14/NIK. It thereby acts as an activator of the non-canonical NF-kappa-B2/NFKB2 pathway. May also play an important role in cell proliferation and/or anti-apoptosis. In Mus musculus (Mouse), this protein is E3 ubiquitin-protein ligase ZFP91 (Zfp91).